Consider the following 425-residue polypeptide: G protein-activated inward rectifier potassium channel 2 (425 aa).

Topologically, residues 1–91 are cytoplasmic; that stretch reads MTMAKLTESM…IFTTLVDLKW (91 aa). 2 positions are modified to phosphoserine: S18 and S25. The helical transmembrane segment at 92 to 116 threads the bilayer; it reads RFNLLIFVMVYTVTWLFFGMIWWLI. The Extracellular portion of the chain corresponds to 117–140; the sequence is AYIRGDMDHIEDPSWTPCVTNLNG. The helical; Pore-forming intramembrane region spans 141–152; it reads FVSAFLFSIETE. The segment at residues 153–159 is an intramembrane region (pore-forming); that stretch reads TTIGYGY. A Selectivity filter motif is present at residues 154-159; that stretch reads TIGYGY. The Extracellular portion of the chain corresponds to 160 to 168; the sequence is RVITDKCPE. A helical membrane pass occupies residues 169 to 190; the sequence is GIILLLIQSVLGSIVNAFMVGC. The Cytoplasmic portion of the chain corresponds to 191–425; that stretch reads MFVKISQPKK…VANLENESKV (235 aa). The segment at 392–425 is disordered; sequence NQHAELETEEEEKNPEELTERNGDVANLENESKV. Residues 422–425 carry the PDZ-binding motif; sequence ESKV.

Belongs to the inward rectifier-type potassium channel (TC 1.A.2.1) family. KCNJ6 subfamily. Associates with KCNJ3/GIRK1to form a G-protein-activated heteromultimer pore-forming unit. Associates with KCNJ5/GRIK4 to form a G-protein-activated heteromultimer pore-forming unit. The resulting inward current is much larger. Interacts (via PDZ-binding motif) with SNX27 (via PDZ domain); the interaction is required when endocytosed to prevent degradation in lysosomes and promote recycling to the plasma membrane. In terms of assembly, associates with KCNJ3/GRIK1 to form a G-protein-activated heteromultimer pore-forming unit. As to quaternary structure, associates with KCNJ3/GRIK1 to form a G-protein-activated heteromultimer pore-forming unit. The resulting inward current is much larger. In terms of tissue distribution, expressed in the brain.

It localises to the membrane. It catalyses the reaction K(+)(in) = K(+)(out). Its activity is regulated as follows. Activated by phosphatidylinositol 4,5 biphosphate (PtdIns(4,5)P2). In terms of biological role, inward rectifier potassium channels are characterized by a greater tendency to allow potassium to flow into the cell rather than out of it. Their voltage dependence is regulated by the concentration of extracellular potassium; as external potassium is raised, the voltage range of the channel opening shifts to more positive voltages. The inward rectification is mainly due to the blockage of outward current by internal magnesium. This potassium channel is controlled by G proteins. Forms a functional channel in association with KCNJ3/GIRK1. Inward rectifier potassium channels are characterized by a greater tendency to allow potassium to flow into the cell rather than out of it. Their voltage dependence is regulated by the concentration of extracellular potassium; as external potassium is raised, the voltage range of the channel opening shifts to more positive voltages. The inward rectification is mainly due to the blockage of outward current by internal magnesium. This potassium channel is controlled by G proteins. The sequence is that of G protein-activated inward rectifier potassium channel 2 (Kcnj6) from Mus musculus (Mouse).